We begin with the raw amino-acid sequence, 711 residues long: Cyclomaltodextrin glucanotransferase (711 aa).

The signal sequence occupies residues 1–31 (MRRWLSLVLSMSFVFSAIFIVSDTQKVTVEA). The A1 stretch occupies residues 32–165 (AGNLNKVNFT…GIKVIIDFAP (134 aa)). Positions 55, 57, 60, and 61 each coordinate Ca(2+). Cysteine 71 and cysteine 78 are disulfide-bonded. Ca(2+) is bound by residues glycine 79 and aspartate 81. Residue 127–128 (YW) coordinates substrate. Asparagine 166 contacts Ca(2+). The b stretch occupies residues 166-229 (NHTSPASETN…NLFDLADLNH (64 aa)). Substrate is bound at residue histidine 167. Isoleucine 217 serves as a coordination point for Ca(2+). 220 to 223 (NLFD) is a substrate binding site. Aspartate 226 contacts Ca(2+). The interval 230-433 (QNPVIDRYLK…LRRNNPALAY (204 aa)) is A2. Residue arginine 254 participates in substrate binding. The active-site Nucleophile is the aspartate 256. 259 to 260 (KH) lines the substrate pocket. Histidine 260 lines the Ca(2+) pocket. The active-site Proton donor is glutamate 284. Positions 354, 398, and 402 each coordinate substrate. Residues 434–522 (GDTEQRWING…EVGVWAYSAT (89 aa)) are c. The d stretch occupies residues 523 to 606 (ESTPIIGHVG…SAAYDNFEVL (84 aa)). In terms of domain architecture, IPT/TIG spans 526 to 604 (PIIGHVGPMM…QTSAAYDNFE (79 aa)). One can recognise a CBM20 domain in the interval 605-711 (VLTNDQVSVR…TGKIIVDWQN (107 aa)). The e stretch occupies residues 607–711 (TNDQVSVRFV…TGKIIVDWQN (105 aa)).

It belongs to the glycosyl hydrolase 13 family. As to quaternary structure, monomer. Ca(2+) serves as cofactor.

The protein localises to the secreted. It carries out the reaction Cyclizes part of a (1-&gt;4)-alpha-D-glucan chain by formation of a (1-&gt;4)-alpha-D-glucosidic bond.. In Geobacillus stearothermophilus (Bacillus stearothermophilus), this protein is Cyclomaltodextrin glucanotransferase (cgt).